The sequence spans 415 residues: Light-independent protochlorophyllide reductase subunit N (415 aa).

Residues Cys16, Cys41, and Cys98 each coordinate [4Fe-4S] cluster.

The protein belongs to the BchN/ChlN family. In terms of assembly, protochlorophyllide reductase is composed of three subunits; BchL, BchN and BchB. Forms a heterotetramer of two BchB and two BchN subunits. The cofactor is [4Fe-4S] cluster.

The enzyme catalyses chlorophyllide a + oxidized 2[4Fe-4S]-[ferredoxin] + 2 ADP + 2 phosphate = protochlorophyllide a + reduced 2[4Fe-4S]-[ferredoxin] + 2 ATP + 2 H2O. It participates in porphyrin-containing compound metabolism; bacteriochlorophyll biosynthesis (light-independent). Component of the dark-operative protochlorophyllide reductase (DPOR) that uses Mg-ATP and reduced ferredoxin to reduce ring D of protochlorophyllide (Pchlide) to form chlorophyllide a (Chlide). This reaction is light-independent. The NB-protein (BchN-BchB) is the catalytic component of the complex. This Roseiflexus sp. (strain RS-1) protein is Light-independent protochlorophyllide reductase subunit N.